Reading from the N-terminus, the 764-residue chain is FHF complex subunit HOOK interacting protein 2A (764 aa).

The disordered stretch occupies residues 190–236; it reads SEDGPKGQDPGSGDVSQCQQPQELSGATGVEPTESEEEPPHQMDDLS. Polar residues predominate over residues 203–214; the sequence is DVSQCQQPQELS.

The protein belongs to the FHIP family.

Functionally, may be required for proper functioning of the nervous system. This is FHF complex subunit HOOK interacting protein 2A from Mus musculus (Mouse).